The following is a 238-amino-acid chain: MTKKVSRRLRELQAKVEDREYGPLDALSLLKETATAKFAEAAEAHIRLGIDPKYTDQQLRTTVALPKGTGQIVRVAVIARGEKVTEASNAGADVFGSEELIDEIQKGRMDFDKLIATPDVMPQVAKLGKMLGPRGLMPSPKGGTVTFDIASAIAEFKAGKLEFRADRTGIVHVMFGKASFSPEDLLVNLKALQETIDRNRPSGAKGRYWRTFYVSATMGPSIRVDINALRDYKLTEAA.

It belongs to the universal ribosomal protein uL1 family. As to quaternary structure, part of the 50S ribosomal subunit.

In terms of biological role, binds directly to 23S rRNA. The L1 stalk is quite mobile in the ribosome, and is involved in E site tRNA release. Protein L1 is also a translational repressor protein, it controls the translation of the L11 operon by binding to its mRNA. This Trichormus variabilis (strain ATCC 29413 / PCC 7937) (Anabaena variabilis) protein is Large ribosomal subunit protein uL1.